A 199-amino-acid chain; its full sequence is 5'-deoxynucleotidase YfbR (199 aa).

Substrate contacts are provided by residues 18-19 (RW) and histidine 33. Residues 30–142 (VSEHSLQVAM…VKQADALCAY (113 aa)) form the HD domain. A divalent metal cation contacts are provided by histidine 33, histidine 68, and aspartate 69. Substrate-binding positions include aspartate 69, 77-80 (DLPT), and aspartate 137. A divalent metal cation is bound at residue aspartate 137.

The protein belongs to the 5DNU family. Homodimer. Requires a divalent metal cation as cofactor.

It localises to the cytoplasm. It carries out the reaction a 2'-deoxyribonucleoside 5'-phosphate + H2O = a 2'-deoxyribonucleoside + phosphate. Catalyzes the strictly specific dephosphorylation of 2'-deoxyribonucleoside 5'-monophosphates. This is 5'-deoxynucleotidase YfbR from Shigella dysenteriae serotype 1 (strain Sd197).